The chain runs to 379 residues: Armadillo repeat-containing X-linked protein 3 (379 aa).

Over 1-6 (MGYARK) the chain is Mitochondrial intermembrane. 2 mitochondrion outer membrane (MOM)-targeting sequence regions span residues 1–6 (MGYARK) and 26–37 (RLTRGRKQNKEK). Residues 7 to 29 (VGWVTAGLVIGAGACYCIYRLTR) form a helical; Signal-anchor membrane-spanning segment. The Cytoplasmic portion of the chain corresponds to 30 to 379 (GRKQNKEKMA…AEHMFPKSQE (350 aa)). Phosphoserine is present on residues serine 61, serine 67, and serine 72. The interval 89–98 (RARARARARA) is nuclear localization signal. Serine 110 is subject to Phosphoserine. 3 ARM repeats span residues 111–151 (PNSD…NNAA), 153–192 (AFNR…NLSV), and 233–272 (VTNE…NLAE).

It belongs to the eutherian X-chromosome-specific Armcx family. In terms of assembly, interacts (via ARM domain) with MIRO1, MIRO2 and TRAK2. The interaction with Miro is calcium-dependent. Interacts with SOX10.

It is found in the mitochondrion outer membrane. The protein resides in the cytoplasm. Its subcellular location is the nucleus. Regulates mitochondrial aggregation and transport in axons in living neurons. May link mitochondria to the TRAK2-kinesin motor complex via its interaction with Miro and TRAK2. Mitochondrial distribution and dynamics is regulated through ARMCX3 protein degradation, which is promoted by PCK and negatively regulated by WNT1. Enhances the SOX10-mediated transactivation of the neuronal acetylcholine receptor subunit alpha-3 and beta-4 subunit gene promoters. The chain is Armadillo repeat-containing X-linked protein 3 (ARMCX3) from Pongo abelii (Sumatran orangutan).